Consider the following 200-residue polypeptide: Cysteine dioxygenase type 1 (200 aa).

Fe cation contacts are provided by H86, H88, and H140. Positions 93–157 form a cross-link, 3'-(S-cysteinyl)-tyrosine (Cys-Tyr); it reads CFLKMLQGNL…TEPAVSLHLY (65 aa).

The protein belongs to the cysteine dioxygenase family. Monomer. Fe(2+) is required as a cofactor. It depends on Ni(2+) as a cofactor. Requires Zn(2+) as cofactor. Post-translationally, the thioether cross-link between Cys-93 and Tyr-157 plays a structural role through stabilizing the Fe(2+) ion, and prevents the production of highly damaging free hydroxyl radicals by holding the oxygen radical via hydroxyl hydrogen. In terms of tissue distribution, highly expressed in liver and placenta. Low expression in heart, brain and pancreas. Also detected in hepatoblastoma Hep-G2 cells.

The catalysed reaction is L-cysteine + O2 = 3-sulfino-L-alanine + H(+). It functions in the pathway organosulfur biosynthesis; taurine biosynthesis; hypotaurine from L-cysteine: step 1/2. Its function is as follows. Catalyzes the oxidation of cysteine to cysteine sulfinic acid with addition of molecular dioxygen. This Homo sapiens (Human) protein is Cysteine dioxygenase type 1 (CDO1).